Consider the following 50-residue polypeptide: Photosystem II reaction center protein M (50 aa).

The helical transmembrane segment at 7–27 threads the bilayer; sequence GFVASLLFVGVPTIFLIGLFI.

It belongs to the PsbM family. In terms of assembly, PSII is composed of 1 copy each of membrane proteins PsbA, PsbB, PsbC, PsbD, PsbE, PsbF, PsbH, PsbI, PsbJ, PsbK, PsbL, PsbM, PsbT, PsbX, PsbY, Psb30/Ycf12, peripheral proteins PsbO, CyanoQ (PsbQ), PsbU, PsbV and a large number of cofactors. It forms dimeric complexes.

Its subcellular location is the cellular thylakoid membrane. Functionally, one of the components of the core complex of photosystem II (PSII). PSII is a light-driven water:plastoquinone oxidoreductase that uses light energy to abstract electrons from H(2)O, generating O(2) and a proton gradient subsequently used for ATP formation. It consists of a core antenna complex that captures photons, and an electron transfer chain that converts photonic excitation into a charge separation. This subunit is found at the monomer-monomer interface. This chain is Photosystem II reaction center protein M, found in Prochlorococcus marinus (strain MIT 9515).